The following is a 374-amino-acid chain: Deoxyguanosinetriphosphate triphosphohydrolase-like protein (374 aa).

Residues Arg65–Asn196 form the HD domain.

It belongs to the dGTPase family. Type 2 subfamily.

The protein is Deoxyguanosinetriphosphate triphosphohydrolase-like protein (dgt) of Nitrosomonas europaea (strain ATCC 19718 / CIP 103999 / KCTC 2705 / NBRC 14298).